The sequence spans 231 residues: Ribose-5-phosphate isomerase A (231 aa).

Residues S31–T34, D87–D90, and K100–G103 contribute to the substrate site. E109 functions as the Proton acceptor in the catalytic mechanism. K127 provides a ligand contact to substrate.

This sequence belongs to the ribose 5-phosphate isomerase family. In terms of assembly, homodimer.

It carries out the reaction aldehydo-D-ribose 5-phosphate = D-ribulose 5-phosphate. Its pathway is carbohydrate degradation; pentose phosphate pathway; D-ribose 5-phosphate from D-ribulose 5-phosphate (non-oxidative stage): step 1/1. In terms of biological role, catalyzes the reversible conversion of ribose-5-phosphate to ribulose 5-phosphate. This is Ribose-5-phosphate isomerase A from Chlamydia pneumoniae (Chlamydophila pneumoniae).